Reading from the N-terminus, the 171-residue chain is Co-chaperone protein HscB (171 aa).

The J domain maps to 2–74 (DYFTLFGLPA…LARAEYLLSL (73 aa)).

It belongs to the HscB family. As to quaternary structure, interacts with HscA and stimulates its ATPase activity. Interacts with IscU.

Co-chaperone involved in the maturation of iron-sulfur cluster-containing proteins. Seems to help targeting proteins to be folded toward HscA. In Enterobacter sp. (strain 638), this protein is Co-chaperone protein HscB.